The sequence spans 74 residues: Anaphase-promoting complex subunit 13 (74 aa).

The protein belongs to the APC13 family. In terms of assembly, the APC/C is composed of at least 12 subunits.

The protein resides in the nucleus. Its pathway is protein modification; protein ubiquitination. Its function is as follows. Component of the anaphase promoting complex/cyclosome (APC/C), a cell cycle-regulated E3 ubiquitin ligase that controls progression through mitosis and the G1 phase of the cell cycle. The APC/C complex acts by mediating ubiquitination and subsequent degradation of target proteins: it mainly mediates the formation of 'Lys-11'-linked polyubiquitin chains and, to a lower extent, the formation of 'Lys-48'- and 'Lys-63'-linked polyubiquitin chains. The APC/C complex catalyzes assembly of branched 'Lys-11'-/'Lys-48'-linked branched ubiquitin chains on target proteins. The sequence is that of Anaphase-promoting complex subunit 13 (anapc13) from Xenopus tropicalis (Western clawed frog).